Reading from the N-terminus, the 582-residue chain is Formate--tetrahydrofolate ligase (582 aa).

65 to 72 provides a ligand contact to ATP; sequence TPLGEGKT.

The protein belongs to the formate--tetrahydrofolate ligase family.

It catalyses the reaction (6S)-5,6,7,8-tetrahydrofolate + formate + ATP = (6R)-10-formyltetrahydrofolate + ADP + phosphate. The protein operates within one-carbon metabolism; tetrahydrofolate interconversion. The sequence is that of Formate--tetrahydrofolate ligase from Vibrio parahaemolyticus serotype O3:K6 (strain RIMD 2210633).